Here is a 480-residue protein sequence, read N- to C-terminus: EGF-like repeat and discoidin I-like domain-containing protein 3 (480 aa).

The first 23 residues, 1–23 (MKRSVAVWLLVGLSLGVPQFGKG), serve as a signal peptide directing secretion. Positions 24–60 (DICDPNPCENGGICLPGLADGSFSCECPDGFTDPNCS) constitute an EGF-like 1 domain. 3 cysteine pairs are disulfide-bonded: Cys26/Cys37, Cys31/Cys48, and Cys50/Cys59. Residue Thr73 is glycosylated (O-linked (GalNAc...) threonine). 2 consecutive EGF-like domains span residues 74–117 (SAGP…IHCQ) and 119–155 (NINECEVEPCKNGGICTDLVANYSCECPGEFMGRNCQ). Intrachain disulfides connect Cys78/Cys89, Cys83/Cys105, and Cys107/Cys116. Residue Thr88 is glycosylated (O-linked (Fuc...) threonine). Positions 96–98 (RGD) match the Cell attachment site motif. Positions 119, 120, and 122 each coordinate Ca(2+). Cystine bridges form between Cys123–Cys134, Cys128–Cys143, Cys145–Cys154, Cys158–Cys314, Cys301–Cys305, and Cys319–Cys476. The Ca(2+) site is built by Asp136 and Leu137. Asn140 is a glycosylation site (N-linked (GlcNAc...) asparagine). F5/8 type C domains lie at 158 to 314 (CSGP…LLGC) and 319 to 476 (CSEP…LLGC).

Its subcellular location is the secreted. In terms of biological role, promotes adhesion of endothelial cells through interaction with the alpha-v/beta-3 integrin receptor. Inhibits formation of vascular-like structures. May be involved in regulation of vascular morphogenesis of remodeling in embryonic development. The chain is EGF-like repeat and discoidin I-like domain-containing protein 3 (EDIL3) from Homo sapiens (Human).